The chain runs to 342 residues: Aldo-keto reductase pigE (342 aa).

The signal sequence occupies residues 1-27 (MGSISPKTRFPIVLGAGLIGSPGLFEG). Aspartate 52 lines the NADP(+) pocket. Tyrosine 57 acts as the Proton donor in catalysis. 2 residues coordinate NADP(+): glutamine 182 and arginine 236. N-linked (GlcNAc...) asparagine glycosylation occurs at asparagine 271.

It belongs to the aldo/keto reductase family. Aldo/keto reductase 2 subfamily.

It participates in secondary metabolite biosynthesis. Aldo-keto reductase; part of the gene cluster that mediates the biosynthesis of azaphilone pigments (MonAzPs), a complex mixture of compounds with a common azaphilone skeleton very widely used as food colorants. Within the pathway, pigE is involved in the dehydration of the C-11 alcohol followed by the reduction of the C6(7) double bond which increases the electrophilicity of the C-5 ketone of the resulting acyl benzopyran and allows the intramolecular Knoevenagel aldol condensation with the C-20 enol of the side chain to yield the characteristic linear tricyclic carbon skeletons of the yellow pigments. The first step of the pathway is performed by the nrPKS pigA that forms the hexaketide precursor from successive condensations of five malonyl-CoA units, with a simple acetyl-CoA starter unit. The role of esterase pigG is not clear, but it may play at most a supplementary role in the formation of the benzaldehyde produced by the pigA nrPKS. This very reactive benzaldehyde is intercepted by the pigC ketoreductase that to provide the first stable enzyme-free MonAzPs intermediate, 6-(4-hydroxy-2-oxopentyl)-3-methyl-2,4-dioxocyclohexane carbaldehyde, also known as M7PKS-1. The FAD-dependent monooxygenase pigN hydroxylates M7PKS-1 at C-4, which triggers the formation of the pyran ring. PigJ, pigK and pigD are involved in the acetylation of the pyran ring. PigJ and pigK form the two subunits of a dedicated fungal FAS that produces the side chain fatty acyl moiety of MonAzPs and pigD transfers the fatty acyl chain to the C-4 alcohol. PigM and pigO are involved in the elimination of the omega-1 alcohol. PigM acts as an O-acetyltransferase that synthesizes the putative O-11 acetyl intermediate whereas pigO eliminates acetic acid to yield an intermediate with a C10(11) double bond. The dehydration of the C-11 alcohol followed by the reduction of the C6(7) double bond by the NAD(P)H-dependent oxidoreductase pigE increases the electrophilicity of the C-5 ketone of the resulting acyl benzopyran. This in turn sets up the C-5 ketone for an intramolecular Knoevenagel aldol condensation with the C-20 enol of the side chain. This condensation affords the characteristic linear tricyclic carbon skeletons of the yellow pigments that serve as the common precursors for the classical yellow pigments monascin and ankaflavin, orange pigments rubopunctatin and monascorubrin, and red pigments ribropunctamine and monascorubramine. The FAD-dependent oxidoreductase pigF is especially invoved in the biosynthesis of orange and red pigments via desaturation of C6(7). This chain is Aldo-keto reductase pigE, found in Monascus ruber (Mold).